A 296-amino-acid chain; its full sequence is MSDKHINLVIVTGMSGAGKTVAIQSFEDLGYFTIDNMPPALVPKFLELIEQTNENRRVALVVDMRSRLFFKEINSTLDSIESNPSIDFWILFLDATDGELVSRYKETRRSHPLAADGRVLDGIRLERELLSPLKSMSQHVVDTTKLTPRQLRKTISDQFSEGSNQASFRIEVMSFGFKYGLPLDADLVFDVRFLPNPYYQVELREKTGLDEDVFNYVMSHPESEVFYKHLLNLIVPILPAYQKEGKSVLTVAIGCTGGQHRSVAFAHCLAESLATDWSVNESHRDQNRRKETVNRS.

13–20 is an ATP binding site; sequence GMSGAGKT. 63-66 serves as a coordination point for GTP; sequence DMRS.

This sequence belongs to the RapZ-like family.

In terms of biological role, displays ATPase and GTPase activities. The chain is Nucleotide-binding protein spyM18_0713 from Streptococcus pyogenes serotype M18 (strain MGAS8232).